Consider the following 132-residue polypeptide: MDVFQEGLAMVVQDPLLCDLPIQVTLEEVNSQIALEYGQAMTVRVCKMDGEVMPVVVVQSATVLDLKKAIQRYVQLKQEREGGIQHISWSYVWRTYHLTSAGEKLTEDRKKLRDYGIRNRDEVSFIKKLRQK.

One can recognise a Ubiquitin-like domain in the interval 41-132 (MTVRVCKMDG…VSFIKKLRQK (92 aa)).

In terms of assembly, component of the U11/U12 snRNPs that are part of the U12-type spliceosome.

It localises to the nucleus. This chain is U11/U12 small nuclear ribonucleoprotein 25 kDa protein (SNRNP25), found in Homo sapiens (Human).